Consider the following 515-residue polypeptide: Bifunctional purine biosynthesis protein PurH (515 aa).

The 145-residue stretch at 1–145 (MTKRALISVS…KNHASVTVVV (145 aa)) folds into the MGS-like domain.

It belongs to the PurH family.

The enzyme catalyses (6R)-10-formyltetrahydrofolate + 5-amino-1-(5-phospho-beta-D-ribosyl)imidazole-4-carboxamide = 5-formamido-1-(5-phospho-D-ribosyl)imidazole-4-carboxamide + (6S)-5,6,7,8-tetrahydrofolate. It catalyses the reaction IMP + H2O = 5-formamido-1-(5-phospho-D-ribosyl)imidazole-4-carboxamide. The protein operates within purine metabolism; IMP biosynthesis via de novo pathway; 5-formamido-1-(5-phospho-D-ribosyl)imidazole-4-carboxamide from 5-amino-1-(5-phospho-D-ribosyl)imidazole-4-carboxamide (10-formyl THF route): step 1/1. It participates in purine metabolism; IMP biosynthesis via de novo pathway; IMP from 5-formamido-1-(5-phospho-D-ribosyl)imidazole-4-carboxamide: step 1/1. This Streptococcus pyogenes serotype M18 (strain MGAS8232) protein is Bifunctional purine biosynthesis protein PurH.